Here is a 591-residue protein sequence, read N- to C-terminus: MAERTHACGKVTVEAVGQTVQLKGWVQKRRDLGGLIFIDLRDRTGIVQVVFNPETSKEALEVAETIRSEYVLHVEGTVVERGEGAINDNMATGRIEVQATKVSVLNAAKTTPIIIADDTDASEDVRLKYRYLDLRRPVMFNTFKMRHDVTKTIRNFLDTEEFLEVETPILTKSTPEGARDYLVPSRVHDGEFYALPQSPQLFKQLLMVGGFERYYQVARCFRDEDLRADRQPEFTQIDIEASFLTQDEILDMMERMMTKVMKDAKGVEVSAPFPRMKYADAMARYGSDKPDTRFEMELTDLSEFAAGCGFKVFTSAVESGGQVKAINAKGAASKYSRKDIDALTEFVKVYGAKGLAWLKVEEDGLKGPIAKFFGEEDASVLKNTLEATAGDLLLFVADKKSVVADSLGALRLRLGKELELIDESKFNFLWVTDWPLLEYDEDADRYFAAHHPFTMPFREDVELLETAPEKARAQAYDLVLNGYELGGGSLRIYERDVQEKMFKALGFSQEEAQEQFGFLLEAFEYGTPPHGGIALGLDRLVMLLAGRTNLRDTIAFPKTASASCLLTEAPSPVAEAQLEELNLKLNVKEEK.

E176 contributes to the L-aspartate binding site. Residues Q200–K203 are aspartate. R222 contributes to the L-aspartate binding site. Residues R222 to E224 and Q231 contribute to the ATP site. H450 is an L-aspartate binding site. Position 484 (E484) interacts with ATP. R491 lines the L-aspartate pocket. ATP is bound at residue G536 to R539.

The protein belongs to the class-II aminoacyl-tRNA synthetase family. Type 1 subfamily. In terms of assembly, homodimer.

Its subcellular location is the cytoplasm. It carries out the reaction tRNA(Asx) + L-aspartate + ATP = L-aspartyl-tRNA(Asx) + AMP + diphosphate. Its function is as follows. Aspartyl-tRNA synthetase with relaxed tRNA specificity since it is able to aspartylate not only its cognate tRNA(Asp) but also tRNA(Asn). Reaction proceeds in two steps: L-aspartate is first activated by ATP to form Asp-AMP and then transferred to the acceptor end of tRNA(Asp/Asn). This is Aspartate--tRNA(Asp/Asn) ligase from Bacillus anthracis (strain CDC 684 / NRRL 3495).